Here is a 192-residue protein sequence, read N- to C-terminus: Sarcoplasmic calcium-binding protein, alpha-B and -A chains (192 aa).

Ala-1 is modified (N-acetylalanine). EF-hand domains lie at 4–39 (WDNRVKYVVRYMYDIDDDGFLDKNDFECLAVRNTLI), 56–91 (IMRNLWNEIAELADFNKDGEVTVDEFKMAVQKHCQG), 100–135 (AFKVFIANQFKAIDVNGDGKVGLDEYRLDCITRSAF), and 136–171 (AEVKEIDDAYDKLTTEDDRKAGGLTLERYQDLYAQF). Asp-17, Asp-19, Asp-21, Asp-28, Asp-69, Asn-71, Asp-73, Glu-75, Glu-80, Asp-113, Asn-115, Asp-117, Lys-119, and Glu-124 together coordinate Ca(2+).

SCPs from crayfish, lobster, and shrimp are polymorphic dimers; three isotypes (alpha-alpha, alpha-beta, and beta-beta) have been identified.

In terms of biological role, like parvalbumins, SCPs seem to be more abundant in fast contracting muscles, but no functional relationship can be established from this distribution. This chain is Sarcoplasmic calcium-binding protein, alpha-B and -A chains, found in Penaeus sp. (Penoeid shrimp).